We begin with the raw amino-acid sequence, 162 residues long: Putative 4-hydroxy-4-methyl-2-oxoglutarate aldolase (162 aa).

Substrate contacts are provided by residues 75 to 78 and Arg97; that span reads GDML. An a divalent metal cation-binding site is contributed by Asp98.

Belongs to the class II aldolase/RraA-like family. As to quaternary structure, homotrimer. A divalent metal cation is required as a cofactor.

It catalyses the reaction 4-hydroxy-4-methyl-2-oxoglutarate = 2 pyruvate. The catalysed reaction is oxaloacetate + H(+) = pyruvate + CO2. Its function is as follows. Catalyzes the aldol cleavage of 4-hydroxy-4-methyl-2-oxoglutarate (HMG) into 2 molecules of pyruvate. Also contains a secondary oxaloacetate (OAA) decarboxylase activity due to the common pyruvate enolate transition state formed following C-C bond cleavage in the retro-aldol and decarboxylation reactions. In Pseudomonas aeruginosa (strain LESB58), this protein is Putative 4-hydroxy-4-methyl-2-oxoglutarate aldolase.